The primary structure comprises 188 residues: Phosphatidylinositol N-acetylglucosaminyltransferase subunit H (188 aa).

The protein belongs to the PIGH family. In terms of assembly, component of the glycosylphosphatidylinositol-N-acetylglucosaminyltransferase (GPI-GnT) complex composed at least by PIGA, PIGC, PIGH, PIGP, PIGQ, PIGY and DPM2. Interacts with PIGQ.

It localises to the cytoplasm. Its pathway is glycolipid biosynthesis; glycosylphosphatidylinositol-anchor biosynthesis. Part of the glycosylphosphatidylinositol-N-acetylglucosaminyltransferase (GPI-GnT) complex that catalyzes the transfer of N-acetylglucosamine from UDP-N-acetylglucosamine to phosphatidylinositol and participates in the first step of GPI biosynthesis. The protein is Phosphatidylinositol N-acetylglucosaminyltransferase subunit H of Bos taurus (Bovine).